A 143-amino-acid chain; its full sequence is Transcriptional regulator MraZ (143 aa).

SpoVT-AbrB domains lie at 5 to 47 (TYAP…SQRE) and 76 to 119 (ASAE…DAEA).

This sequence belongs to the MraZ family. As to quaternary structure, forms oligomers.

Its subcellular location is the cytoplasm. It localises to the nucleoid. The protein is Transcriptional regulator MraZ of Leifsonia xyli subsp. xyli (strain CTCB07).